A 295-amino-acid chain; its full sequence is Nucleotide-binding protein RD1_1380 (295 aa).

Position 16–23 (16–23 (GPSGAGRS)) interacts with ATP. 63–66 (DPRN) serves as a coordination point for GTP.

Belongs to the RapZ-like family.

Its function is as follows. Displays ATPase and GTPase activities. This is Nucleotide-binding protein RD1_1380 from Roseobacter denitrificans (strain ATCC 33942 / OCh 114) (Erythrobacter sp. (strain OCh 114)).